A 108-amino-acid polypeptide reads, in one-letter code: Phosphoribosyl-AMP cyclohydrolase (108 aa).

Position 72 (D72) interacts with Mg(2+). C73 lines the Zn(2+) pocket. Mg(2+)-binding residues include D74 and D76. Residues C89 and C96 each contribute to the Zn(2+) site.

The protein belongs to the PRA-CH family. In terms of assembly, homodimer. The cofactor is Mg(2+). Zn(2+) is required as a cofactor.

Its subcellular location is the cytoplasm. It catalyses the reaction 1-(5-phospho-beta-D-ribosyl)-5'-AMP + H2O = 1-(5-phospho-beta-D-ribosyl)-5-[(5-phospho-beta-D-ribosylamino)methylideneamino]imidazole-4-carboxamide. It participates in amino-acid biosynthesis; L-histidine biosynthesis; L-histidine from 5-phospho-alpha-D-ribose 1-diphosphate: step 3/9. Functionally, catalyzes the hydrolysis of the adenine ring of phosphoribosyl-AMP. The chain is Phosphoribosyl-AMP cyclohydrolase from Archaeoglobus fulgidus (strain ATCC 49558 / DSM 4304 / JCM 9628 / NBRC 100126 / VC-16).